The chain runs to 441 residues: Ribulose bisphosphate carboxylase large chain (441 aa).

2 residues coordinate substrate: asparagine 89 and threonine 139. Lysine 141 serves as the catalytic Proton acceptor. Substrate is bound at residue lysine 143. Mg(2+) is bound by residues lysine 167, aspartate 169, and glutamate 170. N6-carboxylysine is present on lysine 167. Histidine 260 acts as the Proton acceptor in catalysis. Substrate-binding residues include arginine 261, histidine 293, and serine 345.

It belongs to the RuBisCO large chain family. Type I subfamily. Heterohexadecamer of 8 large chains and 8 small chains; disulfide-linked. The disulfide link is formed within the large subunit homodimers. Requires Mg(2+) as cofactor. Post-translationally, the disulfide bond which can form in the large chain dimeric partners within the hexadecamer appears to be associated with oxidative stress and protein turnover.

Its subcellular location is the plastid. It is found in the chloroplast. The enzyme catalyses 2 (2R)-3-phosphoglycerate + 2 H(+) = D-ribulose 1,5-bisphosphate + CO2 + H2O. It carries out the reaction D-ribulose 1,5-bisphosphate + O2 = 2-phosphoglycolate + (2R)-3-phosphoglycerate + 2 H(+). In terms of biological role, ruBisCO catalyzes two reactions: the carboxylation of D-ribulose 1,5-bisphosphate, the primary event in carbon dioxide fixation, as well as the oxidative fragmentation of the pentose substrate in the photorespiration process. Both reactions occur simultaneously and in competition at the same active site. This chain is Ribulose bisphosphate carboxylase large chain, found in Viola sororia (Woolly blue violet).